Here is an 84-residue protein sequence, read N- to C-terminus: Sec-independent protein translocase protein TatA (84 aa).

Residues 1–21 (MPNLGVPELLIIALVIFLLFG) traverse the membrane as a helical segment. Basic and acidic residues predominate over residues 42 to 57 (EMDEMKTDGDKKELAE). Residues 42–84 (EMDEMKTDGDKKELAEKQAPTAEQQQAQDLAQPKSEQPNEHNA) form a disordered region. Positions 62-77 (TAEQQQAQDLAQPKSE) are enriched in polar residues.

It belongs to the TatA/E family. As to quaternary structure, the Tat system comprises two distinct complexes: a TatABC complex, containing multiple copies of TatA, TatB and TatC subunits, and a separate TatA complex, containing only TatA subunits. Substrates initially bind to the TatABC complex, which probably triggers association of the separate TatA complex to form the active translocon.

It localises to the cell membrane. In terms of biological role, part of the twin-arginine translocation (Tat) system that transports large folded proteins containing a characteristic twin-arginine motif in their signal peptide across membranes. TatA could form the protein-conducting channel of the Tat system. The polypeptide is Sec-independent protein translocase protein TatA (Corynebacterium jeikeium (strain K411)).